The following is a 40-amino-acid chain: Putative protein FAM86JP (40 aa).

The segment at 1–40 (MPGAFSQNSSKRRAVLPRSHRVAGRGPAEAGCLPGAPAGS) is disordered. Residues 10–23 (SKRRAVLPRSHRVA) are compositionally biased toward basic residues.

This chain is Putative protein FAM86JP, found in Homo sapiens (Human).